The sequence spans 1605 residues: MTGPTKISILGQESIVADFGLWRNYVAKDLISGCPSTTYVLITDTNIGSIYTPGFQKSFEEAAASVSPSPRLLIYNAPPGEVSKSRQTKADIEDWMLSQSPPCGRDTVVIALGGGVIGDLTGFVAATYMRGVRFVQVPTTLLAMVDSSIGGKTAIDTPLGKNLIGAIWQPSRIYIDLEFLETLPVREFINGMAEVIKTAAISSEEEFTALEDNAETILSAVRREVKPGQRRFEGIEEILKARILASARHKAFVVSADEREGGLRNLLNWGHSIGHAIEAILTPQILHGECVAIGMVKEAELARHLGILKGVAVARIVKCIAAYGLPTSLKDSRIRKLTAGKHCSVDQILFNMALDKKNDGPKKKIVLLSAIGRTYEPRASVVPNEDIGVVLAPSIEVHPGVSTTSEVVCAPPGSKSISNRALVLAALGSGTVRIKNLLHSDDTEVMLNALERLGAATFSWEEEGEVLVVNGKGGALQAHPSPLYLGNAGTASRFLTTVATLATASSVDSSVLTGNNRMKQRPIGDLVDALTANGAQIEYVENKGSLPLKIAASGGFTGGQINLAAKVSSQYVSSLLMCAPYAKEPVTLKLVGGKPISQPYIDMTTAMMRSFGIDVKKSTTEEHTYHIPQGRYINPAEYVVESDASSATYPLAIAAVTGTTCTIPNIGSKSLQGDARFAVDVLRPMGCTVEQTDTSTTVTGPADGVLRPLPNVDMEPMTDAFLGASVLAAIARGKDSNHTTRIYGIANQRVKECNRIKAMHDELAKFGVVCREHDDGLEIDGIDRSTLRQPAGGVFCYDDHRVAFSFSVLSLIAPKPTLILEKECVGKTWPGWWDTLRQKFAVKLEGKELKEAESPVLTRAEKASASVFIIGMRGAGKTTSGHWVASTLKRPFIDLDDELERIEGMTIPDIIKQRGWQGFRDAELNLLQRTMKERPTGHVFACGGGVVEIPEARKLLIDWHKTKGNVLLIMRDIKQVMAFLNIDKTRPAYVEDMLGVWLRRKPWFQECSNIQYYSQHASAGLPRASEDFARFIKFVTGLEDSLGTIKKKQHSFFVSLTLPDVRGADQILEQACVGSDAVELRVDLLEDPDSSNGIPTVDFVADQISYLRSRITLPVIFTIRTKGQGGRFPDDAHAEAMQLYRLAVRSGCEFVDLEIAFPDEMLRAVTEMKGYSKIIASHHDPNGELSWANMSWMKYYNRALEYGDVIKLVGVARNLDDNTALRKFKNWAEEAHDVPLIAINMGGNGQLSRILNGFMTPVSHPALPFRAAPGQLSATDIRKGLSLMGEIKKKRFALFGSPISESRSPALHNTLFAEMGLPHEYTRLETANVEDVKDFIRAPDFGGASVTIPLKLDIMPLLDEITAEAEIIGAVNTVVPVSDGEGKPQRLVGHNTDWQGMVQCLRNAGAYGADGSASALVVGGGGTSRAAIYALHQMGFSPIYIVGRNPAKLESMVSTFPTSYNIQIVEGNEKLEHVPHVAIGTIPADRPIDPGMREILCHMFERAQEADADASRTIEGSPRVLLEMAYKPRVTALMQLAVDAGWTTIPGLEALIGQGVHQVGLIDLLQMDITDGVQFQHWTGIRPLYERARVCCDILLSGRTMLTCS.

Residues Met1–Asn384 are 3-dehydroquinate synthase. NAD(+) is bound by residues Asp44 to Asn46, Glu81 to Lys84, Gly114 to Val116, and Asp119. Arg130 lines the 7-phospho-2-dehydro-3-deoxy-D-arabino-heptonate pocket. Thr139 to Thr140 contacts NAD(+). 2 residues coordinate 7-phospho-2-dehydro-3-deoxy-D-arabino-heptonate: Asp146 and Lys152. An NAD(+)-binding site is contributed by Lys161. Position 162 (Asn162) interacts with 7-phospho-2-dehydro-3-deoxy-D-arabino-heptonate. Residues Phe179–Thr182 and Asn190 contribute to the NAD(+) site. Glu194 serves as a coordination point for Zn(2+). Residues Glu194–Lys197 and Lys250 contribute to the 7-phospho-2-dehydro-3-deoxy-D-arabino-heptonate site. The Proton acceptor; for 3-dehydroquinate synthase activity role is filled by Glu260. Residues Arg264–Asn268 and His271 each bind 7-phospho-2-dehydro-3-deoxy-D-arabino-heptonate. Zn(2+) is bound at residue His271. His275 (proton acceptor; for 3-dehydroquinate synthase activity) is an active-site residue. 7-phospho-2-dehydro-3-deoxy-D-arabino-heptonate is bound by residues His287 and Lys356. Position 287 (His287) interacts with Zn(2+). An EPSP synthase region spans residues Val397–Val842. Cys824 functions as the For EPSP synthase activity in the catalytic mechanism. A shikimate kinase region spans residues Ser864 to Ser1055. Gly871–Thr878 is an ATP binding site. The interval Leu1056–Asp1276 is 3-dehydroquinase. The Proton acceptor; for 3-dehydroquinate dehydratase activity role is filled by His1179. Lys1207 serves as the catalytic Schiff-base intermediate with substrate; for 3-dehydroquinate dehydratase activity. Residues Lys1289 to Ser1605 form a shikimate dehydrogenase region.

The protein in the N-terminal section; belongs to the sugar phosphate cyclases superfamily. Dehydroquinate synthase family. It in the 2nd section; belongs to the EPSP synthase family. This sequence in the 3rd section; belongs to the shikimate kinase family. In the 4th section; belongs to the type-I 3-dehydroquinase family. The protein in the C-terminal section; belongs to the shikimate dehydrogenase family. Homodimer. Zn(2+) serves as cofactor.

It is found in the cytoplasm. It catalyses the reaction 7-phospho-2-dehydro-3-deoxy-D-arabino-heptonate = 3-dehydroquinate + phosphate. The catalysed reaction is 3-dehydroquinate = 3-dehydroshikimate + H2O. It carries out the reaction shikimate + NADP(+) = 3-dehydroshikimate + NADPH + H(+). The enzyme catalyses shikimate + ATP = 3-phosphoshikimate + ADP + H(+). It catalyses the reaction 3-phosphoshikimate + phosphoenolpyruvate = 5-O-(1-carboxyvinyl)-3-phosphoshikimate + phosphate. The protein operates within metabolic intermediate biosynthesis; chorismate biosynthesis; chorismate from D-erythrose 4-phosphate and phosphoenolpyruvate: step 2/7. Its pathway is metabolic intermediate biosynthesis; chorismate biosynthesis; chorismate from D-erythrose 4-phosphate and phosphoenolpyruvate: step 3/7. It participates in metabolic intermediate biosynthesis; chorismate biosynthesis; chorismate from D-erythrose 4-phosphate and phosphoenolpyruvate: step 4/7. It functions in the pathway metabolic intermediate biosynthesis; chorismate biosynthesis; chorismate from D-erythrose 4-phosphate and phosphoenolpyruvate: step 5/7. The protein operates within metabolic intermediate biosynthesis; chorismate biosynthesis; chorismate from D-erythrose 4-phosphate and phosphoenolpyruvate: step 6/7. Functionally, the AROM polypeptide catalyzes 5 consecutive enzymatic reactions in prechorismate polyaromatic amino acid biosynthesis. The chain is Pentafunctional AROM polypeptide from Aspergillus fumigatus (strain CBS 144.89 / FGSC A1163 / CEA10) (Neosartorya fumigata).